We begin with the raw amino-acid sequence, 371 residues long: Aminomethyltransferase (371 aa).

This sequence belongs to the GcvT family. In terms of assembly, the glycine cleavage system is composed of four proteins: P, T, L and H.

It carries out the reaction N(6)-[(R)-S(8)-aminomethyldihydrolipoyl]-L-lysyl-[protein] + (6S)-5,6,7,8-tetrahydrofolate = N(6)-[(R)-dihydrolipoyl]-L-lysyl-[protein] + (6R)-5,10-methylene-5,6,7,8-tetrahydrofolate + NH4(+). Its function is as follows. The glycine cleavage system catalyzes the degradation of glycine. The chain is Aminomethyltransferase from Oceanobacillus iheyensis (strain DSM 14371 / CIP 107618 / JCM 11309 / KCTC 3954 / HTE831).